The sequence spans 324 residues: N-acetylmuramoyl-L-alanine amidase sle1 (324 aa).

The signal sequence occupies residues 1-25 (MQKKYITAIIGTTALSALASTHAQA). LysM domains are found at residues 27–70 (TTHT…VLKV), 84–127 (TVYT…KLKV), and 147–190 (ATYT…KLKV). Residues 200–324 (SNNTRSNGGY…YQVRNYKFIH (125 aa)) form the Peptidase C51 domain.

It localises to the secreted. The protein resides in the cell surface. The enzyme catalyses Hydrolyzes the link between N-acetylmuramoyl residues and L-amino acid residues in certain cell-wall glycopeptides.. Peptidoglycan hydrolase involved in the splitting of the septum during cell division. The protein is N-acetylmuramoyl-L-alanine amidase sle1 (sle1) of Staphylococcus epidermidis (strain ATCC 12228 / FDA PCI 1200).